Here is a 127-residue protein sequence, read N- to C-terminus: Modulator protein MzrA (127 aa).

The Cytoplasmic portion of the chain corresponds to 1 to 11 (MRKPRVTLRHL). A helical membrane pass occupies residues 12–31 (AWSTMLLMVLGTGMLFWSAV). Residues 32–127 (RQQESTLAIR…RLRDAPHRMG (96 aa)) are Periplasmic-facing.

It belongs to the MzrA family. Interacts with EnvZ.

The protein localises to the cell inner membrane. Its function is as follows. Modulates the activity of the EnvZ/OmpR two-component regulatory system, probably by directly modulating EnvZ enzymatic activity and increasing stability of phosphorylated OmpR. This Citrobacter rodentium (strain ICC168) (Citrobacter freundii biotype 4280) protein is Modulator protein MzrA.